The chain runs to 854 residues: Valine--tRNA ligase (854 aa).

The 'HIGH' region motif lies at 46–56 (PTVSGDLHIGH). The 'KMSKS' region signature appears at 551-555 (KMSKS). Lysine 554 contributes to the ATP binding site.

This sequence belongs to the class-I aminoacyl-tRNA synthetase family. ValS type 2 subfamily. In terms of assembly, monomer.

It localises to the cytoplasm. The catalysed reaction is tRNA(Val) + L-valine + ATP = L-valyl-tRNA(Val) + AMP + diphosphate. Its function is as follows. Catalyzes the attachment of valine to tRNA(Val). As ValRS can inadvertently accommodate and process structurally similar amino acids such as threonine, to avoid such errors, it has a 'posttransfer' editing activity that hydrolyzes mischarged Thr-tRNA(Val) in a tRNA-dependent manner. This Orientia tsutsugamushi (strain Boryong) (Rickettsia tsutsugamushi) protein is Valine--tRNA ligase.